Consider the following 156-residue polypeptide: Small ribosomal subunit protein uS7 (156 aa).

It belongs to the universal ribosomal protein uS7 family. As to quaternary structure, part of the 30S ribosomal subunit. Contacts proteins S9 and S11.

One of the primary rRNA binding proteins, it binds directly to 16S rRNA where it nucleates assembly of the head domain of the 30S subunit. Is located at the subunit interface close to the decoding center, probably blocks exit of the E-site tRNA. The sequence is that of Small ribosomal subunit protein uS7 from Citrifermentans bemidjiense (strain ATCC BAA-1014 / DSM 16622 / JCM 12645 / Bem) (Geobacter bemidjiensis).